The chain runs to 145 residues: Phospholipase A2 phospholipin (145 aa).

The signal sequence occupies residues 1-15 (MVDLARRCSGSTEGR). Ca(2+)-binding residues include W24, G26, and G28. 5 disulfide bridges follow: C25-C46, C45-C84, C52-C77, C75-C116, and C121-C132. H49 is a catalytic residue. D50 contacts Ca(2+). Positions 124–128 (KRSGR) are excised as a propeptide.

It belongs to the phospholipase A2 family. Group III subfamily. In terms of assembly, heterodimer composed of a small subunit and a large subunit; disulfid-linked. Ca(2+) serves as cofactor. Expressed by the venom gland.

Its subcellular location is the secreted. It carries out the reaction a 1,2-diacyl-sn-glycero-3-phosphocholine + H2O = a 1-acyl-sn-glycero-3-phosphocholine + a fatty acid + H(+). In terms of biological role, scorpion venom phospholipase A2 (PLA2) that contains enzymatic activity, but does not inhibit ryanodine receptors in contrary to imperatoxin-1, another heterodimer of P.imperator venom. PLA2 catalyzes the calcium-dependent hydrolysis of the 2-acyl groups in 3-sn-phosphoglycerides. This Pandinus imperator (Emperor scorpion) protein is Phospholipase A2 phospholipin.